Consider the following 265-residue polypeptide: Anamorsin homolog 1 (265 aa).

The segment at 1-143 (MAATAAAALA…KASWSMGSSF (143 aa)) is N-terminal SAM-like domain. The segment at 144 to 175 (PLKKATKGLPKIQIDDDSELIDEDSLLTEDDL) is linker. [2Fe-2S] cluster contacts are provided by C186, C195, C198, and C200. The interval 186–200 (CEVGATRKACKNCTC) is fe-S binding site A. Positions 226, 229, 237, and 240 each coordinate [4Fe-4S] cluster. Short sequence motifs (cx2C motif) lie at residues 226-229 (CGNC) and 237-240 (CGTC). Residues 226–240 (CGNCGLGDAFRCGTC) form a fe-S binding site B region.

It belongs to the anamorsin family. Monomer. [2Fe-2S] cluster is required as a cofactor. [4Fe-4S] cluster serves as cofactor.

The protein localises to the cytoplasm. It is found in the mitochondrion intermembrane space. Component of the cytosolic iron-sulfur (Fe-S) protein assembly (CIA) machinery. Required for the maturation of extramitochondrial Fe-S proteins. Part of an electron transfer chain functioning in an early step of cytosolic Fe-S biogenesis, facilitating the de novo assembly of a [4Fe-4S] cluster on the cytosolic Fe-S scaffold complex. Electrons are transferred from NADPH via a FAD- and FMN-containing diflavin oxidoreductase. Together with the diflavin oxidoreductase, also required for the assembly of the diferric tyrosyl radical cofactor of ribonucleotide reductase (RNR), probably by providing electrons for reduction during radical cofactor maturation in the catalytic small subunit. The sequence is that of Anamorsin homolog 1 from Oryza sativa subsp. indica (Rice).